The chain runs to 449 residues: Tubulin alpha chain (449 aa).

GTP contacts are provided by Gln-11, Glu-71, Ser-140, Gly-144, Thr-145, Thr-179, Asn-206, and Asn-228. Residue Glu-71 coordinates Mg(2+). The active site involves Glu-254.

The protein belongs to the tubulin family. In terms of assembly, dimer of alpha and beta chains. A typical microtubule is a hollow water-filled tube with an outer diameter of 25 nm and an inner diameter of 15 nM. Alpha-beta heterodimers associate head-to-tail to form protofilaments running lengthwise along the microtubule wall with the beta-tubulin subunit facing the microtubule plus end conferring a structural polarity. Microtubules usually have 13 protofilaments but different protofilament numbers can be found in some organisms and specialized cells. Mg(2+) serves as cofactor.

It is found in the cytoplasm. Its subcellular location is the cytoskeleton. The enzyme catalyses GTP + H2O = GDP + phosphate + H(+). Its function is as follows. Tubulin is the major constituent of microtubules, a cylinder consisting of laterally associated linear protofilaments composed of alpha- and beta-tubulin heterodimers. Microtubules grow by the addition of GTP-tubulin dimers to the microtubule end, where a stabilizing cap forms. Below the cap, tubulin dimers are in GDP-bound state, owing to GTPase activity of alpha-tubulin. In Gibberella zeae (strain ATCC MYA-4620 / CBS 123657 / FGSC 9075 / NRRL 31084 / PH-1) (Wheat head blight fungus), this protein is Tubulin alpha chain (TUB1).